The chain runs to 156 residues: Biotin carboxyl carrier protein of acetyl-CoA carboxylase (156 aa).

One can recognise a Biotinyl-binding domain in the interval G80–V156. Residue K122 is modified to N6-biotinyllysine.

As to quaternary structure, homodimer.

The protein operates within lipid metabolism; fatty acid biosynthesis. Functionally, this protein is a component of the acetyl coenzyme A carboxylase complex; first, biotin carboxylase catalyzes the carboxylation of the carrier protein and then the transcarboxylase transfers the carboxyl group to form malonyl-CoA. This is Biotin carboxyl carrier protein of acetyl-CoA carboxylase (accB) from Pseudomonas aeruginosa (strain ATCC 15692 / DSM 22644 / CIP 104116 / JCM 14847 / LMG 12228 / 1C / PRS 101 / PAO1).